A 316-amino-acid polypeptide reads, in one-letter code: Aspartate carbamoyltransferase catalytic subunit (316 aa).

Residues R60 and T61 each contribute to the carbamoyl phosphate site. K88 serves as a coordination point for L-aspartate. Residues R110, H138, and Q141 each coordinate carbamoyl phosphate. L-aspartate contacts are provided by R171 and R225. Carbamoyl phosphate is bound by residues G266 and P267.

Belongs to the aspartate/ornithine carbamoyltransferase superfamily. ATCase family. In terms of assembly, heterododecamer (2C3:3R2) of six catalytic PyrB chains organized as two trimers (C3), and six regulatory PyrI chains organized as three dimers (R2).

It catalyses the reaction carbamoyl phosphate + L-aspartate = N-carbamoyl-L-aspartate + phosphate + H(+). The protein operates within pyrimidine metabolism; UMP biosynthesis via de novo pathway; (S)-dihydroorotate from bicarbonate: step 2/3. Catalyzes the condensation of carbamoyl phosphate and aspartate to form carbamoyl aspartate and inorganic phosphate, the committed step in the de novo pyrimidine nucleotide biosynthesis pathway. In Rhizorhabdus wittichii (strain DSM 6014 / CCUG 31198 / JCM 15750 / NBRC 105917 / EY 4224 / RW1) (Sphingomonas wittichii), this protein is Aspartate carbamoyltransferase catalytic subunit.